The sequence spans 435 residues: MIWKRSAVLRFYSVCGLLLQGSQGQFPLTQNVTVVEGGTAILTCRVDQNDNTSLQWSNPAQQTLYFDDKKALRDNRIELVRASWHELSISVSDVSLSDEGQYTCSLFTMPVKTSKAYLTVLGVPEKPQISGFSSPVMEGDLMQLTCKTSGSKPAADIRWFKNDKEIKDVKYLKEEDANRKTFTVSSTLDFRVDRSDDGVAVICRVDHESLNATPQVAMQVLEIHYTPSVKIIPSTPFPQEGQALTLTCESKGKPLPEPVLWTKDGAELPDPDRMVVSGRELNILFLNKTDNGTYRCEATNTIGQSSAEYVLIVHDVPNTLLPTTIIPSLTTAPVTTSVTITTSPSTSASSSSRRDPNSLAGQNGPDHALIGGIVAVVVFVTLCSIFLLGRYLARHKGTYLTNEAKGAEDAPDADTAIINAEGSQVNAEEKKEYFI.

An N-terminal signal peptide occupies residues 1 to 24 (MIWKRSAVLRFYSVCGLLLQGSQG). Topologically, residues 25-367 (QFPLTQNVTV…SLAGQNGPDH (343 aa)) are extracellular. In terms of domain architecture, Ig-like V-type spans 27-119 (PLTQNVTVVE…PVKTSKAYLT (93 aa)). N-linked (GlcNAc...) asparagine glycans are attached at residues asparagine 31 and asparagine 51. 3 cysteine pairs are disulfide-bonded: cysteine 44/cysteine 104, cysteine 146/cysteine 203, and cysteine 248/cysteine 296. 2 Ig-like C2-type domains span residues 127–219 (PQIS…VAMQ) and 227–312 (PSVK…YVLI). A glycan (N-linked (GlcNAc...) asparagine) is linked at asparagine 291. Low complexity predominate over residues 337–351 (SVTITTSPSTSASSS). A disordered region spans residues 337-360 (SVTITTSPSTSASSSSRRDPNSLA). A helical membrane pass occupies residues 368–388 (ALIGGIVAVVVFVTLCSIFLL). Residues 389-435 (GRYLARHKGTYLTNEAKGAEDAPDADTAIINAEGSQVNAEEKKEYFI) are Cytoplasmic-facing. A Phosphoserine modification is found at serine 423.

Belongs to the nectin family. In terms of processing, glycosylation at Asn-51 reduces adhesive binding.

Its subcellular location is the cell membrane. The protein localises to the synapse. The protein resides in the cell projection. It is found in the axon. In terms of biological role, adhesion molecule that engages in homo- and heterophilic interactions with the other nectin-like family members, leading to cell aggregation. Important for synapse organization, providing regulated trans-synaptic adhesion. Preferentially binds to oligodendrocytes. The sequence is that of Cell adhesion molecule 2 (Cadm2) from Mus musculus (Mouse).